A 205-amino-acid polypeptide reads, in one-letter code: Small ribosomal subunit protein mS26 (205 aa).

A mitochondrion-targeting transit peptide spans 1 to 26 (MLRALSTLGARPLGRPPAQFLLLARG).

The protein belongs to the mitochondrion-specific ribosomal protein mS26 family. Component of the mitochondrial ribosome small subunit (28S) which comprises a 12S rRNA and about 30 distinct proteins.

It localises to the mitochondrion. This Bos taurus (Bovine) protein is Small ribosomal subunit protein mS26 (MRPS26).